Reading from the N-terminus, the 641-residue chain is Mannosyl-oligosaccharide 1,2-alpha-mannosidase IB (641 aa).

Threonine 2 is subject to N-acetylthreonine. Residues 2–36 (TTPALLPLSGRRIPPLNLGPPSFPHHRATLRLSEK) are Cytoplasmic-facing. The helical; Signal-anchor for type II membrane protein transmembrane segment at 37 to 57 (FILLLILSAFITLCFGAFFFL) threads the bilayer. Over 58 to 641 (PDSSKHKRFD…TTLSGNPAVR (584 aa)) the chain is Lumenal. Residues 153–175 (NKPLPPVPIPNLVGIRGGDPEDN) are disordered. Cysteine 462 and cysteine 494 are joined by a disulfide. Glutamate 508 serves as the catalytic Proton donor. Threonine 619 serves as a coordination point for Ca(2+). N-linked (GlcNAc...) asparagine glycosylation is present at asparagine 631.

This sequence belongs to the glycosyl hydrolase 47 family. Requires Ca(2+) as cofactor. Highest levels of expression in placenta and testis.

Its subcellular location is the golgi apparatus membrane. It carries out the reaction N(4)-(alpha-D-Man-(1-&gt;2)-alpha-D-Man-(1-&gt;2)-alpha-D-Man-(1-&gt;3)-[alpha-D-Man-(1-&gt;2)-alpha-D-Man-(1-&gt;3)-[alpha-D-Man-(1-&gt;2)-alpha-D-Man-(1-&gt;6)]-alpha-D-Man-(1-&gt;6)]-beta-D-Man-(1-&gt;4)-beta-D-GlcNAc-(1-&gt;4)-beta-D-GlcNAc)-L-asparaginyl-[protein] (N-glucan mannose isomer 9A1,2,3B1,2,3) + 4 H2O = N(4)-(alpha-D-Man-(1-&gt;3)-[alpha-D-Man-(1-&gt;3)-[alpha-D-Man-(1-&gt;6)]-alpha-D-Man-(1-&gt;6)]-beta-D-Man-(1-&gt;4)-beta-D-GlcNAc-(1-&gt;4)-beta-D-GlcNAc)-L-asparaginyl-[protein] (N-glucan mannose isomer 5A1,2) + 4 beta-D-mannose. It catalyses the reaction N(4)-(alpha-D-Man-(1-&gt;2)-alpha-D-Man-(1-&gt;2)-alpha-D-Man-(1-&gt;3)-[alpha-D-Man-(1-&gt;3)-[alpha-D-Man-(1-&gt;2)-alpha-D-Man-(1-&gt;6)]-alpha-D-Man-(1-&gt;6)]-beta-D-Man-(1-&gt;4)-beta-D-GlcNAc-(1-&gt;4)-beta-D-GlcNAc)-L-asparaginyl-[protein] (N-glucan mannose isomer 8A1,2,3B1,3) + 3 H2O = N(4)-(alpha-D-Man-(1-&gt;3)-[alpha-D-Man-(1-&gt;3)-[alpha-D-Man-(1-&gt;6)]-alpha-D-Man-(1-&gt;6)]-beta-D-Man-(1-&gt;4)-beta-D-GlcNAc-(1-&gt;4)-beta-D-GlcNAc)-L-asparaginyl-[protein] (N-glucan mannose isomer 5A1,2) + 3 beta-D-mannose. It functions in the pathway protein modification; protein glycosylation. With respect to regulation, inhibited by both 1-deoxymannojirimycin and kifunensine. Involved in the maturation of Asn-linked oligosaccharides. Progressively trim alpha-1,2-linked mannose residues from Man(9)GlcNAc(2) to produce Man(5)GlcNAc(2). The chain is Mannosyl-oligosaccharide 1,2-alpha-mannosidase IB (MAN1A2) from Homo sapiens (Human).